The following is a 255-amino-acid chain: Ribonuclease HII (255 aa).

The RNase H type-2 domain maps to A72–L255. A divalent metal cation contacts are provided by D78, E79, and D170.

This sequence belongs to the RNase HII family. Mn(2+) is required as a cofactor. Mg(2+) serves as cofactor.

It localises to the cytoplasm. The catalysed reaction is Endonucleolytic cleavage to 5'-phosphomonoester.. In terms of biological role, endonuclease that specifically degrades the RNA of RNA-DNA hybrids. The chain is Ribonuclease HII from Staphylococcus aureus (strain MSSA476).